Here is a 1461-residue protein sequence, read N- to C-terminus: Autotransporter adhesin SadA (1461 aa).

Residues 1–54 (MNRIFKVLWNAATGTFVVTSETAKSRGKKNGRRKLAVSALIGLSSIMVSADALA) form the signal peptide. A surface exposed passenger domain region spans residues 55–1372 (NAGNDTGDGV…EEANTYTDQK (1318 aa)). Residues 1373–1461 (MGEMNSKIKG…SAAIGAGFQW (89 aa)) are translocator domain. A run of 4 beta stranded transmembrane segments spans residues 1407–1417 (GANMTSIAGGT), 1421–1431 (ESAVAIGVSMV), 1440–1446 (KLQGTSN), and 1450–1461 (DYSAAIGAGFQW).

The protein belongs to the autotransporter-2 (AT-2) (TC 1.B.40) family. In terms of assembly, homotrimer.

Its subcellular location is the cell surface. It is found in the cell outer membrane. Functionally, involved in cell aggregation, biofilm formation, and adhesion to human intestinal epithelial cells. The sequence is that of Autotransporter adhesin SadA from Salmonella typhimurium (strain LT2 / SGSC1412 / ATCC 700720).